A 165-amino-acid polypeptide reads, in one-letter code: Ubiquitin-conjugating enzyme E2 G2 (165 aa).

An N-acetylalanine modification is found at Ala2. A UBC core domain is found at 4–164 (TALKRLMAEY…AKQIVQKSLG (161 aa)). The active-site Glycyl thioester intermediate is the Cys89.

This sequence belongs to the ubiquitin-conjugating enzyme family. Interacts with AUP1 (via C-terminus); the interaction recruits UBE2G2 to lipid droplets. Interacts with ubiquitin ligases AMFR/gp78 and RNF139/TRC8; recruitment to lipid droplets by AUP1 facilitates interaction of UBE2G2 with AMFR and RNF139, leading to sterol-induced ubiquitination of 3-hydroxy-3-methylglutaryl coenzyme A reductase and its subsequent proteasomal degradation.

Its subcellular location is the endoplasmic reticulum. The protein resides in the lipid droplet. It carries out the reaction S-ubiquitinyl-[E1 ubiquitin-activating enzyme]-L-cysteine + [E2 ubiquitin-conjugating enzyme]-L-cysteine = [E1 ubiquitin-activating enzyme]-L-cysteine + S-ubiquitinyl-[E2 ubiquitin-conjugating enzyme]-L-cysteine.. It participates in protein modification; protein ubiquitination. Its function is as follows. Accepts ubiquitin from the E1 complex and catalyzes its covalent attachment to other proteins. In vitro catalyzes 'Lys-48'-linked polyubiquitination. Involved in endoplasmic reticulum-associated degradation (ERAD). Required for sterol-induced ubiquitination of 3-hydroxy-3-methylglutaryl coenzyme A reductase and its subsequent proteasomal degradation. The chain is Ubiquitin-conjugating enzyme E2 G2 from Bos taurus (Bovine).